The following is a 299-amino-acid chain: DNA-binding transcriptional repressor CapW (299 aa).

Residues 1 to 15 (MPDNFREGDKQDSQK) are compositionally biased toward basic and acidic residues. Residues 1-21 (MPDNFREGDKQDSQKGRQGAR) are disordered. Positions 1-95 (MPDNFREGDK…LFQPVYMTSS (95 aa)) are winged HTH domain. The WYL domain stretch occupies residues 96–207 (LECYLNDLLQ…LSRIVQAQNA (112 aa)). In terms of domain architecture, WYL spans 131–211 (LRRLDTDVVS…VQAQNAGPDE (81 aa)). Residues 156-200 (YQSMSDPQGSKRTLTPHSLVHDGYRWHTRAWCHKRGEYRDFLLSR) are probable ligand-binding region. Residues 208–299 (GPDEERANGD…KDEIYALLKQ (92 aa)) are WCX domain.

Homodimer.

Functionally, transcriptional regulator of a CBASS antivirus system. CBASS (cyclic oligonucleotide-based antiphage signaling system) provides immunity against bacteriophage. The CD-NTase protein synthesizes cyclic nucleotides in response to infection; these serve as specific second messenger signals. The signals activate a diverse range of effectors, leading to bacterial cell death and thus abortive phage infection. A type III CBASS system. Expression of this CBASS system (Cap18-Cap6-Cap7-CdnC-CapW-Cap17) in a susceptible E.coli (strain MG1655) confers resistance to bacteriophage P1. Binds specifically to and represses expression from the CBASS promoter, found between the genes for divergently transcribed capW and cdnC. The sequence is that of DNA-binding transcriptional repressor CapW from Escherichia coli (strain KTE188).